The following is a 290-amino-acid chain: Xyloglucan endotransglucosylase/hydrolase protein 3 (290 aa).

A signal peptide spans 1–21; sequence MDYMRIFSVFVVTLWIIRVDA. Residues 22–220 form the GH16 domain; it reads RVFGGRGIEK…WSYSPFIAHF (199 aa). The active-site Nucleophile is the Glu-109. The active-site Proton donor is Glu-113. Residues Glu-113, 126-128, 136-138, 199-200, and Gly-204 each bind xyloglucan; these read QTN, NRE, and DW. Asn-210 is a glycosylation site (N-linked (GlcNAc...) asparagine). Disulfide bonds link Cys-228-Cys-240 and Cys-276-Cys-289.

The protein belongs to the glycosyl hydrolase 16 family. XTH group 1 subfamily. Post-translationally, contains at least one intrachain disulfide bond essential for its enzymatic activity. Predominantly expressed in flower buds.

It is found in the secreted. The protein localises to the cell wall. Its subcellular location is the extracellular space. The protein resides in the apoplast. It carries out the reaction breaks a beta-(1-&gt;4) bond in the backbone of a xyloglucan and transfers the xyloglucanyl segment on to O-4 of the non-reducing terminal glucose residue of an acceptor, which can be a xyloglucan or an oligosaccharide of xyloglucan.. Catalyzes xyloglucan endohydrolysis (XEH) and/or endotransglycosylation (XET). Cleaves and religates xyloglucan polymers, an essential constituent of the primary cell wall, and thereby participates in cell wall construction of growing tissues. The polypeptide is Xyloglucan endotransglucosylase/hydrolase protein 3 (XTH3) (Arabidopsis thaliana (Mouse-ear cress)).